The primary structure comprises 223 residues: UPF0641 membrane protein PJ4664.05 (223 aa).

The next 5 membrane-spanning stretches (helical) occupy residues 10-30, 49-69, 81-101, 146-166, and 190-210; these read FNSFILHTVATANLIWAFNWI, LTVLSLAVTLLSMVVGLFSDI, ILLYIVCPLETIVSILYWSIV, LSIGPSLLVYLSIAVSYMLWV, and TIFYTVASIISFSCYIVLKMV.

Belongs to the UPF0641 family.

It localises to the endoplasmic reticulum membrane. This is UPF0641 membrane protein PJ4664.05 from Schizosaccharomyces pombe (strain 972 / ATCC 24843) (Fission yeast).